The sequence spans 567 residues: Glucose-6-phosphate isomerase, cytosolic (567 aa).

Glutamate 360 acts as the Proton donor in catalysis. Residues histidine 391 and lysine 516 contribute to the active site.

It belongs to the GPI family. As to quaternary structure, homodimer.

The protein localises to the cytoplasm. The catalysed reaction is alpha-D-glucose 6-phosphate = beta-D-fructose 6-phosphate. It functions in the pathway carbohydrate degradation; glycolysis; D-glyceraldehyde 3-phosphate and glycerone phosphate from D-glucose: step 2/4. The polypeptide is Glucose-6-phosphate isomerase, cytosolic (PHI1) (Zea mays (Maize)).